The chain runs to 605 residues: Copper resistance protein A (605 aa).

The segment at residues 1–41 (MLLKTSRRTFLKGLTLSGVAGSLGVWSFNARSSLSLPVAAS) is a signal peptide (tat-type signal). Residues histidine 100, histidine 102, histidine 142, and histidine 144 each coordinate Cu cation. 3 consecutive repeat copies span residues 382-389 (DHSQMGGM), 414-421 (DHSSMAGM), and 422-429 (DHSRMAGM). The tract at residues 382-429 (DHSQMGGMDNSGEMMSMDGADLPDSGTSSAPMDHSSMAGMDHSRMAGM) is 3 X 8 AA tandem repeats of D-H-X-X-M-X-G-M. 8 residues coordinate Cu cation: histidine 538, histidine 541, histidine 543, histidine 586, cysteine 587, histidine 588, histidine 592, and methionine 597.

This sequence belongs to the multicopper oxidase family. CopA subfamily. Predicted to be exported by the Tat system. The position of the signal peptide cleavage has not been experimentally proven.

Its subcellular location is the periplasm. Functionally, required for the copper-inducible expression of copper resistance. May have oxidase activity. This chain is Copper resistance protein A (pcoA), found in Escherichia coli.